The sequence spans 536 residues: T-complex protein 1 subunit delta (536 aa).

Over residues 1–15 the composition is skewed to polar residues; sequence MPEGKATSSASNTGK. A disordered region spans residues 1-26; that stretch reads MPEGKATSSASNTGKNKGGAYQDRDK. ADP is bound at residue G50. G50 contacts ATP. D101 provides a ligand contact to Mg(2+). Positions 102, 103, 104, 105, 170, 171, 422, and 507 each coordinate ADP. ATP is bound by residues G102 and T103. Residue K171 coordinates ATP.

Belongs to the TCP-1 chaperonin family. In terms of assembly, component of the chaperonin-containing T-complex (TRiC), a hexadecamer composed of two identical back-to-back stacked rings enclosing a protein folding chamber. Each ring is made up of eight different subunits: TCP1/CCT1, CCT2, CCT3, CCT4, CCT5, CCT6A/CCT6, CCT7, CCT8.

The protein resides in the cytoplasm. It catalyses the reaction ATP + H2O = ADP + phosphate + H(+). Its function is as follows. Component of the chaperonin-containing T-complex (TRiC), a molecular chaperone complex that assists the folding of actin, tubulin and other proteins upon ATP hydrolysis. The sequence is that of T-complex protein 1 subunit delta (cct4) from Takifugu rubripes (Japanese pufferfish).